The chain runs to 338 residues: NADPH dehydrogenase (338 aa).

22 to 25 (SPMC) provides a ligand contact to FMN. A substrate-binding site is contributed by tyrosine 27. Residues alanine 59 and glutamine 101 each contribute to the FMN site. 163–166 (HAAH) serves as a coordination point for substrate. FMN contacts are provided by residues arginine 214 and 306–307 (GR).

This sequence belongs to the NADH:flavin oxidoreductase/NADH oxidase family. NamA subfamily. Homotetramer. FMN is required as a cofactor.

The catalysed reaction is A + NADPH + H(+) = AH2 + NADP(+). Its function is as follows. Catalyzes the reduction of the double bond of an array of alpha,beta-unsaturated aldehydes and ketones. It also reduces the nitro group of nitroester and nitroaromatic compounds. It could have a role in detoxification processes. The chain is NADPH dehydrogenase from Listeria monocytogenes serovar 1/2a (strain ATCC BAA-679 / EGD-e).